Reading from the N-terminus, the 367-residue chain is MSDSQTLVVKLGTSVLTGGSRRLNRAHIVELVRQCAQLHAAGHRIVIVTSGAIAAGREHLGYPELPVTIASKQLLAAVGQSRLIQLWEQLFSIYGIHIGQMLLTRADMEDRERFLNARDMLRALLDNHIVPIINENDAVATVEIKVGDNDNLSALAAILAGADKLLLLTDQQGLFTADPRSNPQAELIKDVYGVDDALRSIAGDSVSGLGTGGMSTKLQAADVACRAGIDTIIASGSKPGVIGDVMEGNSVGTRFHAQASPLENRKRWIFGAPPAGEITVDEGATAAILERGSSLLPKGIKSVTGNFSRGEVIRICNQQGRDIAHGVSRYNSDALRRIAGHHSQQIDAILGYEYGPVAVHRDDMITR.

Lys10 contributes to the ATP binding site. Residues Ser50, Asp137, and Asn149 each coordinate substrate. Residues 169-170 and 211-217 each bind ATP; these read TD and TGGMSTK. The region spanning 275-353 is the PUA domain; the sequence is AGEITVDEGA…QQIDAILGYE (79 aa).

This sequence belongs to the glutamate 5-kinase family.

It is found in the cytoplasm. It carries out the reaction L-glutamate + ATP = L-glutamyl 5-phosphate + ADP. Its pathway is amino-acid biosynthesis; L-proline biosynthesis; L-glutamate 5-semialdehyde from L-glutamate: step 1/2. Its function is as follows. Catalyzes the transfer of a phosphate group to glutamate to form L-glutamate 5-phosphate. This Salmonella arizonae (strain ATCC BAA-731 / CDC346-86 / RSK2980) protein is Glutamate 5-kinase.